A 408-amino-acid chain; its full sequence is MVKVNGNYLKLKAGYLFPEIGRRVKAFSAANPEAALIRLGIGDVTEPLPLACREAMKTAIDAMGTAEGFHGYGPEQGYAWLREAIAQQDFQSRGCEINADEIFVSDGSKCDSSNILDILGEGNRVAVTDPVYPVYVDSNVMAGRTGDAGAEGRYAGLTYLPISADNNFSAEIPSEPVDLIYLCFPNNPTGAVATRAQLKAWVDYARSHNALILFDAAYEAFIQDPEIPHSIFEIEGARECAIEFRSFSKNAGFTGTRCAFTVVPKGLKGTAANGELVELWGLWNRRQSTKFNGVSYIIQRGAEAVYSTAGQAEVKTLVSFYMENASIIRQELTSLGLQIYGGEHAPYVWIKTPNGMDSWGFFDHLLNKANVVGTPGSGFGAAGEGYFRLSAFNSRKNVNEAMARIKSL.

2 residues coordinate substrate: tyrosine 15 and glycine 42. Pyridoxal 5'-phosphate contacts are provided by residues tyrosine 72, 108–109 (SK), tyrosine 132, asparagine 187, tyrosine 218, and 246–248 (SFS). Residues lysine 109, tyrosine 132, and asparagine 187 each coordinate substrate. Residue lysine 249 is modified to N6-(pyridoxal phosphate)lysine. Residues arginine 257 and asparagine 292 each coordinate pyridoxal 5'-phosphate. Substrate-binding residues include asparagine 292 and arginine 388.

It belongs to the class-I pyridoxal-phosphate-dependent aminotransferase family. LL-diaminopimelate aminotransferase subfamily. As to quaternary structure, homodimer. Pyridoxal 5'-phosphate serves as cofactor.

It catalyses the reaction (2S,6S)-2,6-diaminopimelate + 2-oxoglutarate = (S)-2,3,4,5-tetrahydrodipicolinate + L-glutamate + H2O + H(+). The protein operates within amino-acid biosynthesis; L-lysine biosynthesis via DAP pathway; LL-2,6-diaminopimelate from (S)-tetrahydrodipicolinate (aminotransferase route): step 1/1. Its function is as follows. Involved in the synthesis of meso-diaminopimelate (m-DAP or DL-DAP), required for both lysine and peptidoglycan biosynthesis. Catalyzes the direct conversion of tetrahydrodipicolinate to LL-diaminopimelate. The protein is LL-diaminopimelate aminotransferase of Synechococcus sp. (strain CC9902).